A 269-amino-acid chain; its full sequence is uncharacterized protein (269 aa).

This sequence to T.pallidum TP0678.

This is an uncharacterized protein from Borreliella burgdorferi (strain ATCC 35210 / DSM 4680 / CIP 102532 / B31) (Borrelia burgdorferi).